Reading from the N-terminus, the 561-residue chain is Potassium-transporting ATPase potassium-binding subunit (561 aa).

12 helical membrane passes run Gly2 to Leu22, Tyr65 to His85, Ala135 to Ile155, Ile177 to Thr197, Phe253 to Phe273, Ala280 to Thr300, Phe327 to Val347, Ala353 to Gly373, Gly378 to Gly398, Ile413 to Ile433, Leu482 to Leu502, and Ala531 to Ile551.

Belongs to the KdpA family. In terms of assembly, the system is composed of three essential subunits: KdpA, KdpB and KdpC.

The protein localises to the cell membrane. Its function is as follows. Part of the high-affinity ATP-driven potassium transport (or Kdp) system, which catalyzes the hydrolysis of ATP coupled with the electrogenic transport of potassium into the cytoplasm. This subunit binds the extracellular potassium ions and delivers the ions to the membrane domain of KdpB through an intramembrane tunnel. The polypeptide is Potassium-transporting ATPase potassium-binding subunit (Anabaena sp. (strain L31)).